The chain runs to 333 residues: Biotin synthase (333 aa).

A Radical SAM core domain is found at 54–283 (FCSNTFDMCS…RAFIRLAGGR (230 aa)). C72, C76, and C79 together coordinate [4Fe-4S] cluster. [2Fe-2S] cluster-binding residues include S116, C148, C208, and R278.

This sequence belongs to the radical SAM superfamily. Biotin synthase family. In terms of assembly, homodimer. [4Fe-4S] cluster is required as a cofactor. Requires [2Fe-2S] cluster as cofactor.

The enzyme catalyses (4R,5S)-dethiobiotin + (sulfur carrier)-SH + 2 reduced [2Fe-2S]-[ferredoxin] + 2 S-adenosyl-L-methionine = (sulfur carrier)-H + biotin + 2 5'-deoxyadenosine + 2 L-methionine + 2 oxidized [2Fe-2S]-[ferredoxin]. It participates in cofactor biosynthesis; biotin biosynthesis; biotin from 7,8-diaminononanoate: step 2/2. Its function is as follows. Catalyzes the conversion of dethiobiotin (DTB) to biotin by the insertion of a sulfur atom into dethiobiotin via a radical-based mechanism. The sequence is that of Biotin synthase from Brachyspira hyodysenteriae (strain ATCC 49526 / WA1).